Here is a 223-residue protein sequence, read N- to C-terminus: Dephospho-CoA kinase (223 aa).

Positions 22–223 (LIGLSGPSCS…LLQEVKKRGF (202 aa)) constitute a DPCK domain. 30 to 35 (CSGKNT) serves as a coordination point for ATP.

This sequence belongs to the CoaE family.

The protein localises to the cytoplasm. It carries out the reaction 3'-dephospho-CoA + ATP = ADP + CoA + H(+). Its pathway is cofactor biosynthesis; coenzyme A biosynthesis; CoA from (R)-pantothenate: step 5/5. Its function is as follows. Catalyzes the phosphorylation of the 3'-hydroxyl group of dephosphocoenzyme A to form coenzyme A. The protein is Dephospho-CoA kinase of Treponema denticola (strain ATCC 35405 / DSM 14222 / CIP 103919 / JCM 8153 / KCTC 15104).